The primary structure comprises 161 residues: Arachidonate 5-lipoxygenase-activating protein (161 aa).

Residues 1–8 (MDQEAVGN) lie on the Lumenal side of the membrane. The helical transmembrane segment at 9–30 (IVLLAIVTLISVVQNGFFAHKV) threads the bilayer. At 31–52 (EHESKTHNGRSFQRTGTLAFER) the chain is on the cytoplasmic side. The helical transmembrane segment at 53-77 (VYTANQNCVDAYPTFLVMLWSAGLL) threads the bilayer. The Lumenal portion of the chain corresponds to 78-80 (CSQ). Residues 81–102 (VPAAFAGLMYLFVRQKYFVGYL) traverse the membrane as a helical segment. The Cytoplasmic portion of the chain corresponds to 103-107 (GERTQ). Residues 108-115 (STPGYIFG) lie within the membrane without spanning it. A helical membrane pass occupies residues 116–128 (KRIILFLFAMSLA). The Lumenal segment spans residues 129-161 (GILNYFFIALFGSDFENYIKTVTTTISPLLLIP).

It belongs to the MAPEG family. In terms of assembly, homotrimer. Interacts with LTC4S and ALOX5.

The protein resides in the nucleus membrane. Its subcellular location is the endoplasmic reticulum membrane. Its function is as follows. Required for leukotriene biosynthesis by ALOX5 (5-lipoxygenase). Anchors ALOX5 to the membrane. Binds arachidonic acid, and could play an essential role in the transfer of arachidonic acid to ALOX5. Binds to MK-886, a compound that blocks the biosynthesis of leukotrienes. The polypeptide is Arachidonate 5-lipoxygenase-activating protein (ALOX5AP) (Bos taurus (Bovine)).